Consider the following 1052-residue polypeptide: Focal adhesion kinase 1 (1052 aa).

The disordered stretch occupies residues 1 to 27 (MAAAYLDPNLNHTPNSSTKTHLGTGME). Ala-2 carries the N-acetylalanine modification. Tyr-5 is subject to Phosphotyrosine. Residues 10–21 (LNHTPNSSTKTH) show a composition bias toward polar residues. A Phosphothreonine modification is found at Thr-13. A phosphoserine mark is found at Ser-29 and Ser-54. An FERM domain is found at 35–355 (RVLKVFHYFE…GYCRLVNGTS (321 aa)). Lys-152 is covalently cross-linked (Glycyl lysine isopeptide (Lys-Gly) (interchain with G-Cter in SUMO)). Tyr-397 is subject to Phosphotyrosine; by autocatalysis. At Tyr-407 the chain carries Phosphotyrosine. Residues 422-680 (IELGRCIGEG…ELKAQLSTIL (259 aa)) form the Protein kinase domain. ATP contacts are provided by residues 428-434 (IGEGQFG), Lys-454, and 500-502 (ELC). The active-site Proton acceptor is Asp-546. The residue at position 570 (Tyr-570) is a Phosphotyrosine. Phosphotyrosine; by RET and SRC is present on residues Tyr-576 and Tyr-577. At Ser-580 the chain carries Phosphoserine. Basic and acidic residues predominate over residues 684-697 (KAQQEERMRMESRR). Disordered regions lie at residues 684 to 734 (KAQQ…PSPQ) and 839 to 922 (LSRG…RSND). Positions 707–1052 (GSDEAPPKPS…LKMLGQTRPH (346 aa)) are interaction with TGFB1I1. A Phosphoserine modification is found at Ser-722. The residue at position 732 (Ser-732) is a Phosphoserine; by CDK5. The segment covering 839 to 849 (LSRGSIDREDG) has biased composition (basic and acidic residues). At Ser-843 the chain carries Phosphoserine. Tyr-861 bears the Phosphotyrosine mark. Over residues 869–880 (PAAPPKKPPRPG) the composition is skewed to pro residues. Ser-887 and Ser-910 each carry phosphoserine. The segment at 912–1052 (PPTANLDRSN…LKMLGQTRPH (141 aa)) is interaction with ARHGEF28. Thr-914 is modified (phosphothreonine). Tyr-925 is subject to Phosphotyrosine.

The protein belongs to the protein kinase superfamily. Tyr protein kinase family. FAK subfamily. Interacts (via first Pro-rich region) with CAS family members (via SH3 domain), including BCAR1, BCAR3, and CASS4. Interacts with NEDD9 (via SH3 domain). Interacts with GIT1. Interacts with SORBS1. Interacts with ARHGEF28. Interacts with SHB. Part of a complex composed of THSD1, PTK2/FAK1, TLN1 and VCL. Interacts with PXN and TLN1. Interacts with STAT1. Interacts with DCC. Interacts with WASL. Interacts with ARHGEF7. Interacts with GRB2 and GRB7. Component of a complex that contains at least FER, CTTN and PTK2/FAK1. Interacts with BMX. Interacts with TGFB1I1. Interacts with STEAP4. Interacts with ZFYVE21. Interacts with ESR1. Interacts with PIK3R1 or PIK3R2. Interacts with SRC, FGR, FLT4 and RET. Interacts with EPHA2 in resting cells; activation of EPHA2 recruits PTPN11, leading to dephosphorylation of PTK2/FAK1 and dissociation of the complex. Interacts with EPHA1 (kinase activity-dependent). Interacts with CD4; this interaction requires the presence of HIV-1 gp120. Interacts with PIAS1. Interacts with ARHGAP26 and SHC1. Interacts with RB1CC1; this inhibits PTK2/FAK1 activity and activation of downstream signaling pathways. Interacts with P53/TP53 and MDM2. Interacts with LPXN (via LD motif 3). Interacts with MISP. Interacts with CIB1 isoform 2. Interacts with CD36. Interacts with EMP2; regulates PTK2 activation and localization. Interacts with DSCAM. Interacts with AMBRA1. Interacts (when tyrosine-phosphorylated) with tensin TNS1; the interaction is increased by phosphorylation of TNS1. In terms of processing, phosphorylated on tyrosine residues upon activation, e.g. upon integrin signaling. Tyr-397 is the major autophosphorylation site, but other kinases can also phosphorylate this residue. Phosphorylation at Tyr-397 promotes interaction with SRC and SRC family members, leading to phosphorylation at Tyr-576, Tyr-577 and at additional tyrosine residues. FGR promotes phosphorylation at Tyr-397 and Tyr-576. FER promotes phosphorylation at Tyr-577, Tyr-861 and Tyr-925, even when cells are not adherent. Tyr-397, Tyr-576 and Ser-722 are phosphorylated only when cells are adherent. Phosphorylation at Tyr-397 is important for interaction with BMX, PIK3R1 and SHC1. Phosphorylation at Tyr-925 is important for interaction with GRB2. Dephosphorylated by PTPN11; PTPN11 is recruited to PTK2 via EPHA2 (tyrosine phosphorylated). Microtubule-induced dephosphorylation at Tyr-397 is crucial for the induction of focal adhesion disassembly; this dephosphorylation could be catalyzed by PTPN11 and regulated by ZFYVE21. Phosphorylation on tyrosine residues is enhanced by NTN1. Sumoylated; this enhances autophosphorylation. Detected in B and T-lymphocytes. Isoform 1 and isoform 6 are detected in lung fibroblasts (at protein level). Ubiquitous. Expressed in epithelial cells (at protein level).

It is found in the cell junction. The protein localises to the focal adhesion. The protein resides in the cell membrane. It localises to the cytoplasm. Its subcellular location is the perinuclear region. It is found in the cell cortex. The protein localises to the cytoskeleton. The protein resides in the microtubule organizing center. It localises to the centrosome. Its subcellular location is the nucleus. It is found in the cilium basal body. It carries out the reaction L-tyrosyl-[protein] + ATP = O-phospho-L-tyrosyl-[protein] + ADP + H(+). Subject to autoinhibition, mediated by interactions between the FERM domain and the kinase domain. Activated by autophosphorylation at Tyr-397. This promotes interaction with SRC and phosphorylation at Tyr-576 and Tyr-577 in the kinase activation loop. Phosphorylation at Tyr-576 and Tyr-577 is required for maximal kinase activity. Inhibited by TAC544, TAE226, PF-573,228 and PF-562,271. Its function is as follows. Non-receptor protein-tyrosine kinase that plays an essential role in regulating cell migration, adhesion, spreading, reorganization of the actin cytoskeleton, formation and disassembly of focal adhesions and cell protrusions, cell cycle progression, cell proliferation and apoptosis. Required for early embryonic development and placenta development. Required for embryonic angiogenesis, normal cardiomyocyte migration and proliferation, and normal heart development. Regulates axon growth and neuronal cell migration, axon branching and synapse formation; required for normal development of the nervous system. Plays a role in osteogenesis and differentiation of osteoblasts. Functions in integrin signal transduction, but also in signaling downstream of numerous growth factor receptors, G-protein coupled receptors (GPCR), EPHA2, netrin receptors and LDL receptors. Forms multisubunit signaling complexes with SRC and SRC family members upon activation; this leads to the phosphorylation of additional tyrosine residues, creating binding sites for scaffold proteins, effectors and substrates. Regulates numerous signaling pathways. Promotes activation of phosphatidylinositol 3-kinase and the AKT1 signaling cascade. Promotes activation of MAPK1/ERK2, MAPK3/ERK1 and the MAP kinase signaling cascade. Promotes localized and transient activation of guanine nucleotide exchange factors (GEFs) and GTPase-activating proteins (GAPs), and thereby modulates the activity of Rho family GTPases. Signaling via CAS family members mediates activation of RAC1. Phosphorylates NEDD9 following integrin stimulation. Recruits the ubiquitin ligase MDM2 to P53/TP53 in the nucleus, and thereby regulates P53/TP53 activity, P53/TP53 ubiquitination and proteasomal degradation. Phosphorylates SRC; this increases SRC kinase activity. Phosphorylates ACTN1, ARHGEF7, GRB7, RET and WASL. Promotes phosphorylation of PXN and STAT1; most likely PXN and STAT1 are phosphorylated by a SRC family kinase that is recruited to autophosphorylated PTK2/FAK1, rather than by PTK2/FAK1 itself. Promotes phosphorylation of BCAR1; GIT2 and SHC1; this requires both SRC and PTK2/FAK1. Promotes phosphorylation of BMX and PIK3R1. Isoform 6 (FRNK) does not contain a kinase domain and inhibits PTK2/FAK1 phosphorylation and signaling. Its enhanced expression can attenuate the nuclear accumulation of LPXN and limit its ability to enhance serum response factor (SRF)-dependent gene transcription. Functionally, isoform 6 (FRNK) does not contain a kinase domain and inhibits PTK2/FAK1 phosphorylation and signaling. Its enhanced expression can attenuate the nuclear accumulation of LPXN and limit its ability to enhance serum response factor (SRF)-dependent gene transcription. In Homo sapiens (Human), this protein is Focal adhesion kinase 1.